A 54-amino-acid chain; its full sequence is UPF0391 membrane protein R00741 (54 aa).

The next 2 helical transmembrane spans lie at 5-25 and 30-50; these read ALVFLIVAIIAGVLGFGGIAG and IAQVLFFLFLIFLVISLVAGL.

This sequence belongs to the UPF0391 family.

Its subcellular location is the cell membrane. The polypeptide is UPF0391 membrane protein R00741 (Rhizobium meliloti (strain 1021) (Ensifer meliloti)).